The following is a 318-amino-acid chain: CRISPR-associated protein Cas7/Csa2 1 (318 aa).

Belongs to the CRISPR-associated protein Cas7/Cst2/DevR family. Subtype I-a/Apern subfamily. In terms of assembly, part of the aCascade ribonucleoprotein complex, minimally composed of Csa2 and Cas5a, which binds crRNA. Other possible components of aCascade in strain P1 are Cas6b (SSO1437) and Csa5 (SSO1443), while SSO1399, Cas5b (SSO1400) and SSO1401 have sometimes been seen weakly associated. Csa2 is probably the major RNA-binding subunit. The Csa2-Cas5a-crRNA complex also binds target DNA homologous to crRNA, probably forming an R-loop. Purified aCascade forms a filament about 6 nm in width.

Its function is as follows. CRISPR (clustered regularly interspaced short palindromic repeat) is an adaptive immune system that provides protection against mobile genetic elements (viruses, transposable elements and conjugative plasmids). CRISPR clusters contain spacers, sequences complementary to antecedent mobile elements, and target invading nucleic acids. CRISPR clusters are transcribed and processed into CRISPR RNA (crRNA). This chain is CRISPR-associated protein Cas7/Csa2 1 (cas7a), found in Saccharolobus solfataricus (strain ATCC 35092 / DSM 1617 / JCM 11322 / P2) (Sulfolobus solfataricus).